A 431-amino-acid chain; its full sequence is Cleavage stimulation factor subunit 1 (431 aa).

The interval 14 to 35 is hydrophobic; the sequence is LYKLIISQLLYDGYISIANGLI. WD repeat units follow at residues 106 to 145, 171 to 210, 215 to 254, 260 to 301, 303 to 343, and 395 to 430; these read SHKG…AKSA, DHVD…AKRA, QEAE…CFVS, QHTD…TTFE, AHDG…TLVR, and GHNN…RSTT.

Homodimer. The CSTF complex is composed of CSTF1 (50 kDa subunit), CSTF2 (64 kDa subunit) and CSTF3 (77 kDa subunit). Interacts (via repeats WD) directly with CSTF3. Interacts (via repeat WD6) with BARD1. Interacts with ERCC6. The N-terminus is blocked.

Its subcellular location is the nucleus. In terms of biological role, one of the multiple factors required for polyadenylation and 3'-end cleavage of mammalian pre-mRNAs. May be responsible for the interaction of CSTF with other factors to form a stable complex on the pre-mRNA. The protein is Cleavage stimulation factor subunit 1 (CSTF1) of Homo sapiens (Human).